The following is a 142-amino-acid chain: Translation initiation factor 2 subunit beta (142 aa).

It belongs to the eIF-2-beta/eIF-5 family. Heterotrimer composed of an alpha, a beta and a gamma chain.

Its function is as follows. eIF-2 functions in the early steps of protein synthesis by forming a ternary complex with GTP and initiator tRNA. This is Translation initiation factor 2 subunit beta from Staphylothermus marinus (strain ATCC 43588 / DSM 3639 / JCM 9404 / F1).